Reading from the N-terminus, the 388-residue chain is Probable ubiquitin-conjugating enzyme E2 L709 (388 aa).

In terms of domain architecture, UBC core spans 3–162 (NVHKRVIKDI…GNDLMVQKLF (160 aa)). Cys-95 functions as the Glycyl thioester intermediate in the catalytic mechanism. The disordered stretch occupies residues 195 to 388 (VEEKSAKTSK…SSKSSKTGKK (194 aa)). Composition is skewed to acidic residues over residues 221–238 (SEEEENSDDDNTDSDSES) and 246–297 (DVVD…ESEE). Positions 310-388 (KTTTKSSSTK…SSKSSKTGKK (79 aa)) are enriched in low complexity.

The protein belongs to the ubiquitin-conjugating enzyme family.

It carries out the reaction S-ubiquitinyl-[E1 ubiquitin-activating enzyme]-L-cysteine + [E2 ubiquitin-conjugating enzyme]-L-cysteine = [E1 ubiquitin-activating enzyme]-L-cysteine + S-ubiquitinyl-[E2 ubiquitin-conjugating enzyme]-L-cysteine.. It participates in protein modification; protein ubiquitination. Its function is as follows. Catalyzes the covalent attachment of ubiquitin to other proteins. The protein is Probable ubiquitin-conjugating enzyme E2 L709 of Acanthamoeba polyphaga (Amoeba).